The sequence spans 256 residues: 14-3-3-like protein GF14-C (256 aa).

The protein belongs to the 14-3-3 family. In terms of assembly, may form a complex with the transcriptional activator VP1 and the bZIP transcription factor EMBP1. Expressed in seedlings, internodes and panicles.

It localises to the cytoplasm. It is found in the nucleus. In terms of biological role, is associated with a DNA binding complex that binds to the G box, a well-characterized cis-acting DNA regulatory element found in plant genes. The polypeptide is 14-3-3-like protein GF14-C (GF14C) (Oryza sativa subsp. japonica (Rice)).